Here is a 115-residue protein sequence, read N- to C-terminus: uncharacterized protein (115 aa).

Residues Met-1 to Thr-24 form the signal peptide. The next 2 membrane-spanning stretches (helical) occupy residues Phe-39–Ile-59 and Tyr-93–Ser-113.

It is found in the membrane. This is an uncharacterized protein from Saccharomyces cerevisiae (strain ATCC 204508 / S288c) (Baker's yeast).